Reading from the N-terminus, the 227-residue chain is Cytochrome c oxidase subunit 2 (227 aa).

The Mitochondrial intermembrane segment spans residues 1-14; that stretch reads MAYPFQLGFQDATS. The helical transmembrane segment at 15 to 45 threads the bilayer; it reads PIMEELLHFHDHTLMIVFLISSLVLYIITLM. Residues 46-59 lie on the Mitochondrial matrix side of the membrane; sequence LTTKLTHTSTMDAQ. The helical transmembrane segment at 60 to 87 threads the bilayer; sequence EVETVWTILPAIILILIALPSLRILYMM. Topologically, residues 88 to 227 are mitochondrial intermembrane; that stretch reads DEVNNPSLTV…FFEKWSASML (140 aa). Residues His161, Cys196, Glu198, Cys200, His204, and Met207 each coordinate Cu cation. Residue Glu198 coordinates Mg(2+).

It belongs to the cytochrome c oxidase subunit 2 family. In terms of assembly, component of the cytochrome c oxidase (complex IV, CIV), a multisubunit enzyme composed of 14 subunits. The complex is composed of a catalytic core of 3 subunits MT-CO1, MT-CO2 and MT-CO3, encoded in the mitochondrial DNA, and 11 supernumerary subunits COX4I, COX5A, COX5B, COX6A, COX6B, COX6C, COX7A, COX7B, COX7C, COX8 and NDUFA4, which are encoded in the nuclear genome. The complex exists as a monomer or a dimer and forms supercomplexes (SCs) in the inner mitochondrial membrane with NADH-ubiquinone oxidoreductase (complex I, CI) and ubiquinol-cytochrome c oxidoreductase (cytochrome b-c1 complex, complex III, CIII), resulting in different assemblies (supercomplex SCI(1)III(2)IV(1) and megacomplex MCI(2)III(2)IV(2)). Found in a complex with TMEM177, COA6, COX18, COX20, SCO1 and SCO2. Interacts with TMEM177 in a COX20-dependent manner. Interacts with COX20. Interacts with COX16. Cu cation serves as cofactor.

It is found in the mitochondrion inner membrane. It carries out the reaction 4 Fe(II)-[cytochrome c] + O2 + 8 H(+)(in) = 4 Fe(III)-[cytochrome c] + 2 H2O + 4 H(+)(out). Its function is as follows. Component of the cytochrome c oxidase, the last enzyme in the mitochondrial electron transport chain which drives oxidative phosphorylation. The respiratory chain contains 3 multisubunit complexes succinate dehydrogenase (complex II, CII), ubiquinol-cytochrome c oxidoreductase (cytochrome b-c1 complex, complex III, CIII) and cytochrome c oxidase (complex IV, CIV), that cooperate to transfer electrons derived from NADH and succinate to molecular oxygen, creating an electrochemical gradient over the inner membrane that drives transmembrane transport and the ATP synthase. Cytochrome c oxidase is the component of the respiratory chain that catalyzes the reduction of oxygen to water. Electrons originating from reduced cytochrome c in the intermembrane space (IMS) are transferred via the dinuclear copper A center (CU(A)) of subunit 2 and heme A of subunit 1 to the active site in subunit 1, a binuclear center (BNC) formed by heme A3 and copper B (CU(B)). The BNC reduces molecular oxygen to 2 water molecules using 4 electrons from cytochrome c in the IMS and 4 protons from the mitochondrial matrix. This chain is Cytochrome c oxidase subunit 2 (MT-CO2), found in Balaenoptera musculus (Blue whale).